We begin with the raw amino-acid sequence, 344 residues long: MRVIRPVEHADIAALMQLAGKTGGGLTSLPANEATLAARIERALKTWSDELPKGEQGYVFVLEDSETGEVGGICAIEVAVGLNDPWYNYRVGTLVHASKELNVYNALPTLFLSNDHTGSSELCTLFLDPEWRKEGNGYLLSKSRFMFMAAFRDKFNEKVVAEMRGVIDEHGYSPFWQSLGKRFFSMDFSRADFLCGTGQKAFIAELMPKHPIYTHFLSEEAQAVIGEVHPQTAPARAVLEKEGFRYRHYIDIFDGGPTLECDIDRVRAIRKSRLVEVAEGQPAPGDYPACLVANENYHHFRAALVRADPQTSRLVLTAAQLDALKCRAGDHVRLVRLCAEEKTV.

Residue L125 coordinates succinyl-CoA. Residue H229 is the Proton donor of the active site.

Belongs to the arginine N-succinyltransferase family.

The catalysed reaction is succinyl-CoA + L-arginine = N(2)-succinyl-L-arginine + CoA + H(+). It participates in amino-acid degradation; L-arginine degradation via AST pathway; L-glutamate and succinate from L-arginine: step 1/5. In terms of biological role, catalyzes the transfer of succinyl-CoA to arginine to produce N(2)-succinylarginine. The sequence is that of Arginine N-succinyltransferase from Salmonella agona (strain SL483).